Reading from the N-terminus, the 225-residue chain is Transcription factor HES-7 (225 aa).

The bHLH domain maps to 12–69 (GPKMLKPLVEKRRRDRINRSLEELRLLLLERTRDQNLRNPKLEKAEILEFAVGYLRER). In terms of domain architecture, Orange spans 92 to 122 (YLSGFRECLLRLAAFAHDASPAARSQLFSAL). The interval 124–225 (GYRRPKPPRP…PPPAFWRPWP (102 aa)) is disordered. Pro residues-rich tracts occupy residues 140-149 (LPAPRPPLDP) and 213-225 (PSLP…RPWP). Positions 221–224 (WRPW) match the WRPW motif motif.

In terms of assembly, transcription repression requires formation of a complex with a corepressor protein of the Groucho/TLE family.

It localises to the nucleus. Its function is as follows. Transcriptional repressor. Represses transcription from both N box- and E box-containing promoters. May with HES1, cooperatively regulate somite formation in the presomitic mesoderm (PSM). May function as a segmentation clock, which is essential for coordinated somite segmentation. The polypeptide is Transcription factor HES-7 (Hes7) (Mus musculus (Mouse)).